Reading from the N-terminus, the 458-residue chain is MKVLFAAAECAPLAKVGGMADVVGSLPLALAEMGLDVRIILPYYGFLGELPKSEQPVWTGGAMFQQVEIYEARLPGSDIPLYLVGHPAFANERIYGFEDEAWRFTLFSRTVAEFLWRGGWDPQVLHCHDWHTGLLPLWMRSMPVMTVFTIHNLAYQGPPLPYFRAFVDVPYDTGAWNPMVAGIIHSDAITAVSPTYAREICTPEYGERLDGLLRGQGNRLTGILNGINTKALDPATDKHLTVNYDTTSLDRRVENKLALQREFGFEVSADRLLVGIVSRLVDQKGFDLLAPLWDNWMHTSGAQLVVLGSGDPFYEFLFRSAAERYPDRIKAVLSYNVPIAQRIYGGADLFLMPSRFEPCGIGQMIALRYGAVPLVRKTGGLADTVFFHNPLDEKGNGFLFDRYDPANLLAMLYRAEEAFRYKDYWRRLQLRGMEADLSWRASAHQYADLYKSLIARLG.

Residue lysine 15 coordinates ADP-alpha-D-glucose.

Belongs to the glycosyltransferase 1 family. Bacterial/plant glycogen synthase subfamily.

It carries out the reaction [(1-&gt;4)-alpha-D-glucosyl](n) + ADP-alpha-D-glucose = [(1-&gt;4)-alpha-D-glucosyl](n+1) + ADP + H(+). Its pathway is glycan biosynthesis; glycogen biosynthesis. Functionally, synthesizes alpha-1,4-glucan chains using ADP-glucose. The polypeptide is Glycogen synthase (Gloeobacter violaceus (strain ATCC 29082 / PCC 7421)).